The following is a 171-amino-acid chain: MRIGHGYDVHKLVSGRKLILGGVDIPYERGLLGHSDADVLLHAISDAILGAIGEGDIGKHFPDTDPAYKGADSIKLLMHVMGLARDRGYAIGNVDATIVAQRPKLAAHIPLMGENIAKALETEASRINVKATTTEELGFCGRGEGIAAYAVALLQRRHELSPETREVLETR.

Positions 8 and 10 each coordinate a divalent metal cation. Residues 8–10 (DVH) and 34–35 (HS) each bind 4-CDP-2-C-methyl-D-erythritol 2-phosphate. H42 is a binding site for a divalent metal cation. 4-CDP-2-C-methyl-D-erythritol 2-phosphate contacts are provided by residues 56-58 (DIG), 61-65 (FPDTD), 132-135 (TTTE), F139, and R142.

It belongs to the IspF family. Homotrimer. The cofactor is a divalent metal cation.

It carries out the reaction 4-CDP-2-C-methyl-D-erythritol 2-phosphate = 2-C-methyl-D-erythritol 2,4-cyclic diphosphate + CMP. Its pathway is isoprenoid biosynthesis; isopentenyl diphosphate biosynthesis via DXP pathway; isopentenyl diphosphate from 1-deoxy-D-xylulose 5-phosphate: step 4/6. Its function is as follows. Involved in the biosynthesis of isopentenyl diphosphate (IPP) and dimethylallyl diphosphate (DMAPP), two major building blocks of isoprenoid compounds. Catalyzes the conversion of 4-diphosphocytidyl-2-C-methyl-D-erythritol 2-phosphate (CDP-ME2P) to 2-C-methyl-D-erythritol 2,4-cyclodiphosphate (ME-CPP) with a corresponding release of cytidine 5-monophosphate (CMP). This is 2-C-methyl-D-erythritol 2,4-cyclodiphosphate synthase from Geotalea daltonii (strain DSM 22248 / JCM 15807 / FRC-32) (Geobacter daltonii).